Consider the following 240-residue polypeptide: MAENVLSAQKRTEQGKGPARRLRQQGLIPAVVYGGKREPTHVALDPATLLKAIETPHKFNTLLELQVEGASKHVLFKDYTVDPVTRKLLHADFLEVSMDQPVKVNVPVVTVGRAAGVAEGGILSVAAHAIVVEALPNKIPVRIEVDVTELKIGRSLHVSELKAPEGCKFKFQTDYVVVFVAVPEKEEVAAPVAAAVPGAAPAEGAAPAAGAAAPAAGAAPAAGAAPAKGGEAKGGDKGKK.

Disordered regions lie at residues 1-20 (MAEN…GPAR) and 220-240 (PAAG…KGKK). Over residues 220–229 (PAAGAAPAKG) the composition is skewed to low complexity. Basic and acidic residues predominate over residues 230 to 240 (GEAKGGDKGKK).

It belongs to the bacterial ribosomal protein bL25 family. CTC subfamily. In terms of assembly, part of the 50S ribosomal subunit; part of the 5S rRNA/L5/L18/L25 subcomplex. Contacts the 5S rRNA. Binds to the 5S rRNA independently of L5 and L18.

Its function is as follows. This is one of the proteins that binds to the 5S RNA in the ribosome where it forms part of the central protuberance. This Anaeromyxobacter dehalogenans (strain 2CP-C) protein is Large ribosomal subunit protein bL25.